The chain runs to 364 residues: MMEKNKRVLLGMSGGTDSSVAAMLLLEAGYEVTGVTFRFYEFNGSTEYLEDARALAARLGIGHITYDARKVFQEQIIDYFIDEYMSGHTPVPCTLCNNQLKWPLLAKIADEMGIFYLATGHYVRKQWVDGNYYIAPAEDVDKDQSFFLWGLRQEILQRMLLPMGGMTKSEARAYAAGRGFEKVSKKKDSIGVCFCPLDYRSFLKKCLCDESGDKNRNIYRKVERGRFLDESGNFIAWHEGYPFYTIGQRRGLGIQLNRAVFVKEIHPETNEVVLASLKSLEKSEMWLKDWNIVDESRLLGCDDVIVKIRYRKQENHCSVTITPEGLLHIRLHEPLSAIAEGQAAAFYKDGLLLGGGIITMSDQR.

ATP is bound by residues 11–18 (GMSGGTDS) and F37. C96 serves as the catalytic Nucleophile. Residues C96 and C193 are joined by a disulfide bond. G120 lines the ATP pocket. The interval 142 to 144 (KDQ) is interaction with tRNA. Residue C193 is the Cysteine persulfide intermediate of the active site. Residues 309-310 (RY) are interaction with tRNA.

This sequence belongs to the MnmA/TRMU family.

It is found in the cytoplasm. The enzyme catalyses S-sulfanyl-L-cysteinyl-[protein] + uridine(34) in tRNA + AH2 + ATP = 2-thiouridine(34) in tRNA + L-cysteinyl-[protein] + A + AMP + diphosphate + H(+). Catalyzes the 2-thiolation of uridine at the wobble position (U34) of tRNA, leading to the formation of s(2)U34. In Bacteroides fragilis (strain YCH46), this protein is tRNA-specific 2-thiouridylase MnmA 1.